Reading from the N-terminus, the 308-residue chain is Ornithine carbamoyltransferase (308 aa).

Carbamoyl phosphate contacts are provided by residues 50 to 53 (STRT), Gln77, Arg101, and 128 to 131 (HPCQ). L-ornithine-binding positions include Asn160, Asp224, and 228-229 (SM). Carbamoyl phosphate-binding positions include 264–265 (CL) and Arg292.

This sequence belongs to the aspartate/ornithine carbamoyltransferase superfamily. OTCase family.

It is found in the cytoplasm. The enzyme catalyses carbamoyl phosphate + L-ornithine = L-citrulline + phosphate + H(+). Its pathway is amino-acid biosynthesis; L-arginine biosynthesis; L-arginine from L-ornithine and carbamoyl phosphate: step 1/3. Functionally, reversibly catalyzes the transfer of the carbamoyl group from carbamoyl phosphate (CP) to the N(epsilon) atom of ornithine (ORN) to produce L-citrulline. In Mycobacterium ulcerans (strain Agy99), this protein is Ornithine carbamoyltransferase.